The primary structure comprises 782 residues: Zinc finger protein 786 (782 aa).

The region spanning 9–80 (LTFEDVAIYF…WRESQKSGNI (72 aa)) is the KRAB domain. Residues 141–164 (PQRHDARAPPPLACGPSESTLKEG) are disordered. Residues 192 to 209 (CGESCWENNHLVMHQRGH) form a C2H2-type 1; degenerate zinc finger. Residues 240–262 (FRCGVCGKSFRRKLCLLRHLAAH) form a C2H2-type 2 zinc finger. The interval 285-364 (SHRLPQQGEK…EGDTEALQHG (80 aa)) is disordered. A C2H2-type 3; degenerate zinc finger spans residues 369-391 (CSCSECGERSPMSARLASPCRAH). 3 C2H2-type zinc fingers span residues 397–419 (FQCA…QHAH), 425–447 (FSCR…IRVH), and 453–475 (FRCA…QRLH). A C2H2-type 7; degenerate zinc finger spans residues 481-503 (FQCPECGLSFRLESMLRAHRLRH). C2H2-type zinc fingers lie at residues 509 to 531 (FSCS…LRVH), 537 to 559 (FQCL…QHTH), 565 to 587 (FSCG…LRVH), 593 to 615 (FQCP…QRLH), 621 to 643 (FQCP…QLLH), 649 to 670 (FSCE…IRTH), 676 to 698 (FQCP…QGLH), 704 to 726 (FHCP…QRIH), and 732 to 754 (FACG…IRVH).

The protein belongs to the krueppel C2H2-type zinc-finger protein family.

Its subcellular location is the nucleus. In terms of biological role, may be involved in transcriptional regulation. The protein is Zinc finger protein 786 (ZNF786) of Homo sapiens (Human).